The chain runs to 88 residues: uncharacterized protein (88 aa).

Residues 39-63 (CEECGAPIPQARREAIPGVRLCIHC) form a dksA C4-type zinc finger.

This is an uncharacterized protein from Escherichia coli (strain K12).